The following is a 493-amino-acid chain: Cytochrome P450 710A3 (493 aa).

The chain crosses the membrane as a helical span at residues 5 to 25 (VSLFASLTPYLVSALLLFLLL). Cys435 serves as a coordination point for heme.

It belongs to the cytochrome P450 family. The cofactor is heme. In terms of tissue distribution, expressed in stems. Detected in primary root caps and immature petals.

The protein resides in the membrane. It catalyses the reaction 5-dehydroepisterol + NADPH + O2 + H(+) = ergosta-5,7,22,24(28)-tetraen-3beta-ol + NADP(+) + 2 H2O. In terms of biological role, required to form the C-22 double bond in the sterol side chain. Possesses in vitro C-22 desaturase activity toward beta-sitosterol and produces stigmasterol. The sequence is that of Cytochrome P450 710A3 from Arabidopsis thaliana (Mouse-ear cress).